The chain runs to 204 residues: Urease accessory protein UreG (204 aa).

11–18 is a GTP binding site; sequence GPVGAGKT.

The protein belongs to the SIMIBI class G3E GTPase family. UreG subfamily. As to quaternary structure, homodimer. UreD, UreF and UreG form a complex that acts as a GTP-hydrolysis-dependent molecular chaperone, activating the urease apoprotein by helping to assemble the nickel containing metallocenter of UreC. The UreE protein probably delivers the nickel.

The protein localises to the cytoplasm. Facilitates the functional incorporation of the urease nickel metallocenter. This process requires GTP hydrolysis, probably effectuated by UreG. This chain is Urease accessory protein UreG, found in Staphylococcus aureus (strain bovine RF122 / ET3-1).